Here is a 536-residue protein sequence, read N- to C-terminus: Probable pectinesterase/pectinesterase inhibitor 59 (536 aa).

An N-terminal signal peptide occupies residues 1–30; it reads MNMMMQKLSILFLHLILLVLLCVHPLTTVA. The tract at residues 31 to 183 is pectinesterase inhibitor 59; it reads DRNSTDWCDK…SHLISNCLAV (153 aa). N-linked (GlcNAc...) asparagine glycosylation is found at asparagine 33, asparagine 91, asparagine 116, asparagine 159, and asparagine 195. The tract at residues 221–522 is pectinesterase 59; sequence NLVVAKDGSG…FTVGKFIAGT (302 aa). Threonine 298 and glutamine 328 together coordinate substrate. Aspartate 351 (proton donor; for pectinesterase activity) is an active-site residue. An intrachain disulfide couples cysteine 365 to cysteine 385. Aspartate 372 functions as the Nucleophile; for pectinesterase activity in the catalytic mechanism. Substrate contacts are provided by arginine 440 and tryptophan 442.

This sequence in the N-terminal section; belongs to the PMEI family. It in the C-terminal section; belongs to the pectinesterase family. Expressed in siliques.

The protein localises to the secreted. It localises to the cell wall. It catalyses the reaction [(1-&gt;4)-alpha-D-galacturonosyl methyl ester](n) + n H2O = [(1-&gt;4)-alpha-D-galacturonosyl](n) + n methanol + n H(+). It functions in the pathway glycan metabolism; pectin degradation; 2-dehydro-3-deoxy-D-gluconate from pectin: step 1/5. In terms of biological role, acts in the modification of cell walls via demethylesterification of cell wall pectin. This chain is Probable pectinesterase/pectinesterase inhibitor 59 (PME59), found in Arabidopsis thaliana (Mouse-ear cress).